Here is a 757-residue protein sequence, read N- to C-terminus: Elongation factor G, mitochondrial (757 aa).

The N-terminal 41 residues, 1–41, are a transit peptide targeting the mitochondrion; it reads MLERAALLHRLRLPAHSLPFIYNGALFGGAKRSFSATSKRC. One can recognise a tr-type G domain in the interval 66-347; sequence KLLRNIGVSA…AIVDYLPEPS (282 aa). GTP is bound by residues 75 to 82, 146 to 150, and 200 to 203; these read AHIDSGKT, DTPGH, and NKMD.

The protein belongs to the TRAFAC class translation factor GTPase superfamily. Classic translation factor GTPase family. EF-G/EF-2 subfamily.

The protein resides in the mitochondrion. It participates in protein biosynthesis; polypeptide chain elongation. In terms of biological role, mitochondrial GTPase that catalyzes the GTP-dependent ribosomal translocation step during translation elongation. During this step, the ribosome changes from the pre-translocational (PRE) to the post-translocational (POST) state as the newly formed A-site-bound peptidyl-tRNA and P-site-bound deacylated tRNA move to the P and E sites, respectively. Catalyzes the coordinated movement of the two tRNA molecules, the mRNA and conformational changes in the ribosome. The sequence is that of Elongation factor G, mitochondrial from Eremothecium gossypii (strain ATCC 10895 / CBS 109.51 / FGSC 9923 / NRRL Y-1056) (Yeast).